Reading from the N-terminus, the 596-residue chain is Zinc finger CCCH domain-containing protein 64 (596 aa).

2 disordered regions span residues 243–263 and 272–291; these read LSPTPTSTMSPAELSAKPPKT and DGAAESKKRPNDSDSDSQYW. C3H1-type zinc fingers lie at residues 303-331 and 335-363; these read SQGEKLCFKFVCSGSCPRGEDCHFQHNAE and QCRRGVCLDLIIKGKCEKGPECSYKHEFQ.

This chain is Zinc finger CCCH domain-containing protein 64, found in Arabidopsis thaliana (Mouse-ear cress).